We begin with the raw amino-acid sequence, 640 residues long: Threonine--tRNA ligase (640 aa).

One can recognise a TGS domain in the interval 1 to 59; it reads MKIKVKLPDGKEKEYDRGITPAEIAKELGVKKAIGAVVNGELWDLKRPIENDCELRLVT. A catalytic region spans residues 240–531; sequence DHRKLGPHLE…LIEHFAGAFP (292 aa). Zn(2+) contacts are provided by C332, H383, and H508.

This sequence belongs to the class-II aminoacyl-tRNA synthetase family. In terms of assembly, homodimer. Zn(2+) is required as a cofactor.

It is found in the cytoplasm. It carries out the reaction tRNA(Thr) + L-threonine + ATP = L-threonyl-tRNA(Thr) + AMP + diphosphate + H(+). Its function is as follows. Catalyzes the attachment of threonine to tRNA(Thr) in a two-step reaction: L-threonine is first activated by ATP to form Thr-AMP and then transferred to the acceptor end of tRNA(Thr). Also edits incorrectly charged L-seryl-tRNA(Thr). This chain is Threonine--tRNA ligase, found in Thermotoga sp. (strain RQ2).